Consider the following 310-residue polypeptide: N-acetyl-gamma-glutamyl-phosphate reductase (310 aa).

Residue C117 is part of the active site.

This sequence belongs to the NAGSA dehydrogenase family. Type 2 subfamily.

It localises to the cytoplasm. The enzyme catalyses N-acetyl-L-glutamate 5-semialdehyde + phosphate + NADP(+) = N-acetyl-L-glutamyl 5-phosphate + NADPH + H(+). The protein operates within amino-acid biosynthesis; L-arginine biosynthesis; N(2)-acetyl-L-ornithine from L-glutamate: step 3/4. Functionally, catalyzes the NADPH-dependent reduction of N-acetyl-5-glutamyl phosphate to yield N-acetyl-L-glutamate 5-semialdehyde. The protein is N-acetyl-gamma-glutamyl-phosphate reductase of Rhizobium rhizogenes (strain K84 / ATCC BAA-868) (Agrobacterium radiobacter).